Here is a 107-residue protein sequence, read N- to C-terminus: Phosphoribosyl-ATP pyrophosphatase (107 aa).

The protein belongs to the PRA-PH family.

It is found in the cytoplasm. It carries out the reaction 1-(5-phospho-beta-D-ribosyl)-ATP + H2O = 1-(5-phospho-beta-D-ribosyl)-5'-AMP + diphosphate + H(+). Its pathway is amino-acid biosynthesis; L-histidine biosynthesis; L-histidine from 5-phospho-alpha-D-ribose 1-diphosphate: step 2/9. This Rhizobium etli (strain CIAT 652) protein is Phosphoribosyl-ATP pyrophosphatase.